Here is a 176-residue protein sequence, read N- to C-terminus: ATP synthase subunit delta (176 aa).

The protein belongs to the ATPase delta chain family. F-type ATPases have 2 components, F(1) - the catalytic core - and F(0) - the membrane proton channel. F(1) has five subunits: alpha(3), beta(3), gamma(1), delta(1), epsilon(1). F(0) has three main subunits: a(1), b(2) and c(10-14). The alpha and beta chains form an alternating ring which encloses part of the gamma chain. F(1) is attached to F(0) by a central stalk formed by the gamma and epsilon chains, while a peripheral stalk is formed by the delta and b chains.

It localises to the cell inner membrane. In terms of biological role, f(1)F(0) ATP synthase produces ATP from ADP in the presence of a proton or sodium gradient. F-type ATPases consist of two structural domains, F(1) containing the extramembraneous catalytic core and F(0) containing the membrane proton channel, linked together by a central stalk and a peripheral stalk. During catalysis, ATP synthesis in the catalytic domain of F(1) is coupled via a rotary mechanism of the central stalk subunits to proton translocation. This protein is part of the stalk that links CF(0) to CF(1). It either transmits conformational changes from CF(0) to CF(1) or is implicated in proton conduction. In Wolinella succinogenes (strain ATCC 29543 / DSM 1740 / CCUG 13145 / JCM 31913 / LMG 7466 / NCTC 11488 / FDC 602W) (Vibrio succinogenes), this protein is ATP synthase subunit delta.